The primary structure comprises 214 residues: 3-isopropylmalate dehydratase small subunit (214 aa).

It belongs to the LeuD family. LeuD type 1 subfamily. Heterodimer of LeuC and LeuD.

It catalyses the reaction (2R,3S)-3-isopropylmalate = (2S)-2-isopropylmalate. It participates in amino-acid biosynthesis; L-leucine biosynthesis; L-leucine from 3-methyl-2-oxobutanoate: step 2/4. Catalyzes the isomerization between 2-isopropylmalate and 3-isopropylmalate, via the formation of 2-isopropylmaleate. In Nitrosococcus oceani (strain ATCC 19707 / BCRC 17464 / JCM 30415 / NCIMB 11848 / C-107), this protein is 3-isopropylmalate dehydratase small subunit.